Reading from the N-terminus, the 237-residue chain is Uridylate kinase (237 aa).

12–15 (KLSG) lines the ATP pocket. Residues 20-25 (GENGFG) are involved in allosteric activation by GTP. Residue glycine 54 participates in UMP binding. ATP contacts are provided by glycine 55 and arginine 59. UMP is bound by residues aspartate 72 and 133–140 (TGNPYFST). Tyrosine 166 and aspartate 169 together coordinate ATP.

The protein belongs to the UMP kinase family. In terms of assembly, homohexamer.

Its subcellular location is the cytoplasm. It carries out the reaction UMP + ATP = UDP + ADP. The protein operates within pyrimidine metabolism; CTP biosynthesis via de novo pathway; UDP from UMP (UMPK route): step 1/1. Allosterically activated by GTP. Inhibited by UTP. Functionally, catalyzes the reversible phosphorylation of UMP to UDP. The protein is Uridylate kinase of Clostridium perfringens (strain ATCC 13124 / DSM 756 / JCM 1290 / NCIMB 6125 / NCTC 8237 / Type A).